Reading from the N-terminus, the 153-residue chain is MVFEGHLVGTGLKVGVVVGRFNEFITSKLLGGALDGLKRHGVEENDIDVAWVPGAFEIPLIAKKMANSGKYDAVITLGTVIRGATTHYDYVCNEVAKGVASLSLQTDIPVIFGVLTTETIEQAIERAGTKAGNKGYESAVAAIEMAHLSKQWA.

5-amino-6-(D-ribitylamino)uracil is bound by residues Phe-21, 55–57 (AFE), and 79–81 (TVI). 84–85 (AT) is a binding site for (2S)-2-hydroxy-3-oxobutyl phosphate. The active-site Proton donor is His-87. Residue Phe-112 participates in 5-amino-6-(D-ribitylamino)uracil binding. Position 126 (Arg-126) interacts with (2S)-2-hydroxy-3-oxobutyl phosphate.

This sequence belongs to the DMRL synthase family. Forms an icosahedral capsid composed of 60 subunits, arranged as a dodecamer of pentamers.

The enzyme catalyses (2S)-2-hydroxy-3-oxobutyl phosphate + 5-amino-6-(D-ribitylamino)uracil = 6,7-dimethyl-8-(1-D-ribityl)lumazine + phosphate + 2 H2O + H(+). It participates in cofactor biosynthesis; riboflavin biosynthesis; riboflavin from 2-hydroxy-3-oxobutyl phosphate and 5-amino-6-(D-ribitylamino)uracil: step 1/2. In terms of biological role, catalyzes the formation of 6,7-dimethyl-8-ribityllumazine by condensation of 5-amino-6-(D-ribitylamino)uracil with 3,4-dihydroxy-2-butanone 4-phosphate. This is the penultimate step in the biosynthesis of riboflavin. This Bacillus cereus (strain 03BB102) protein is 6,7-dimethyl-8-ribityllumazine synthase.